Reading from the N-terminus, the 77-residue chain is Small ribosomal subunit protein uS17 (77 aa).

Belongs to the universal ribosomal protein uS17 family. Part of the 30S ribosomal subunit.

One of the primary rRNA binding proteins, it binds specifically to the 5'-end of 16S ribosomal RNA. The protein is Small ribosomal subunit protein uS17 of Rickettsia akari (strain Hartford).